We begin with the raw amino-acid sequence, 644 residues long: Translation factor GUF1, mitochondrial (644 aa).

Residues 1-14 constitute a mitochondrion transit peptide; sequence MLRKAFRYLVPVRC. One can recognise a tr-type G domain in the interval 46 to 227; sequence ERYRNFSIVA…AIVDRIPPPT (182 aa). GTP contacts are provided by residues 55-62, 120-124, and 174-177; these read AHVDHGKS, DTPGH, and NKID.

The protein belongs to the TRAFAC class translation factor GTPase superfamily. Classic translation factor GTPase family. LepA subfamily.

It localises to the mitochondrion inner membrane. The enzyme catalyses GTP + H2O = GDP + phosphate + H(+). In terms of biological role, promotes mitochondrial protein synthesis. May act as a fidelity factor of the translation reaction, by catalyzing a one-codon backward translocation of tRNAs on improperly translocated ribosomes. Binds to mitochondrial ribosomes in a GTP-dependent manner. This Eremothecium gossypii (strain ATCC 10895 / CBS 109.51 / FGSC 9923 / NRRL Y-1056) (Yeast) protein is Translation factor GUF1, mitochondrial.